The following is a 347-amino-acid chain: Anthranilate phosphoribosyltransferase (347 aa).

5-phospho-alpha-D-ribose 1-diphosphate-binding positions include G82, 85–86 (GD), T90, 92–95 (NIST), 110–118 (KHGNRAITS), and T122. G82 lines the anthranilate pocket. S94 is a Mg(2+) binding site. N113 contributes to the anthranilate binding site. R168 serves as a coordination point for anthranilate. D226 and E227 together coordinate Mg(2+).

The protein belongs to the anthranilate phosphoribosyltransferase family. As to quaternary structure, homodimer. Requires Mg(2+) as cofactor.

The enzyme catalyses N-(5-phospho-beta-D-ribosyl)anthranilate + diphosphate = 5-phospho-alpha-D-ribose 1-diphosphate + anthranilate. Its pathway is amino-acid biosynthesis; L-tryptophan biosynthesis; L-tryptophan from chorismate: step 2/5. Catalyzes the transfer of the phosphoribosyl group of 5-phosphorylribose-1-pyrophosphate (PRPP) to anthranilate to yield N-(5'-phosphoribosyl)-anthranilate (PRA). The sequence is that of Anthranilate phosphoribosyltransferase from Caulobacter sp. (strain K31).